A 201-amino-acid polypeptide reads, in one-letter code: Small ribosomal subunit protein uS4c (201 aa).

Residues 89-152 enclose the S4 RNA-binding domain; it reads MRLDNILFRL…NSRTLVQNLI (64 aa).

It belongs to the universal ribosomal protein uS4 family. In terms of assembly, part of the 30S ribosomal subunit. Contacts protein S5. The interaction surface between S4 and S5 is involved in control of translational fidelity.

The protein resides in the plastid. Its subcellular location is the chloroplast. Functionally, one of the primary rRNA binding proteins, it binds directly to 16S rRNA where it nucleates assembly of the body of the 30S subunit. In terms of biological role, with S5 and S12 plays an important role in translational accuracy. The chain is Small ribosomal subunit protein uS4c (rps4) from Crucihimalaya wallichii (Rock-cress).